We begin with the raw amino-acid sequence, 267 residues long: Orotidine 5'-phosphate decarboxylase (267 aa).

Substrate-binding positions include aspartate 40, 62–64, 93–102, tyrosine 215, and arginine 234; these read KTH and DRKFADIGNT. Residue lysine 95 is the Proton donor of the active site.

The protein belongs to the OMP decarboxylase family.

It catalyses the reaction orotidine 5'-phosphate + H(+) = UMP + CO2. Its pathway is pyrimidine metabolism; UMP biosynthesis via de novo pathway; UMP from orotate: step 2/2. This chain is Orotidine 5'-phosphate decarboxylase (pyrG), found in Phycomyces blakesleeanus (strain ATCC 8743b / DSM 1359 / FGSC 10004 / NBRC 33097 / NRRL 1555).